A 340-amino-acid chain; its full sequence is Glycerol-3-phosphate dehydrogenase [NAD(P)+] (340 aa).

NADPH contacts are provided by serine 11, tryptophan 12, arginine 32, arginine 33, and lysine 106. Residues lysine 106, glycine 138, and serine 140 each contribute to the sn-glycerol 3-phosphate site. Position 142 (alanine 142) interacts with NADPH. Positions 193, 246, 256, 257, and 258 each coordinate sn-glycerol 3-phosphate. The active-site Proton acceptor is lysine 193. An NADPH-binding site is contributed by arginine 257. NADPH contacts are provided by valine 281 and glutamate 283.

The protein belongs to the NAD-dependent glycerol-3-phosphate dehydrogenase family.

Its subcellular location is the cytoplasm. The catalysed reaction is sn-glycerol 3-phosphate + NAD(+) = dihydroxyacetone phosphate + NADH + H(+). It carries out the reaction sn-glycerol 3-phosphate + NADP(+) = dihydroxyacetone phosphate + NADPH + H(+). It participates in membrane lipid metabolism; glycerophospholipid metabolism. Catalyzes the reduction of the glycolytic intermediate dihydroxyacetone phosphate (DHAP) to sn-glycerol 3-phosphate (G3P), the key precursor for phospholipid synthesis. The protein is Glycerol-3-phosphate dehydrogenase [NAD(P)+] of Shouchella clausii (strain KSM-K16) (Alkalihalobacillus clausii).